Reading from the N-terminus, the 561-residue chain is Glutamate--tRNA ligase (561 aa).

The 'HIGH' region motif lies at 107–117 (PNPSGPLHLGH).

This sequence belongs to the class-I aminoacyl-tRNA synthetase family. Glutamate--tRNA ligase type 2 subfamily.

Its subcellular location is the cytoplasm. The catalysed reaction is tRNA(Glu) + L-glutamate + ATP = L-glutamyl-tRNA(Glu) + AMP + diphosphate. In terms of biological role, catalyzes the attachment of glutamate to tRNA(Glu) in a two-step reaction: glutamate is first activated by ATP to form Glu-AMP and then transferred to the acceptor end of tRNA(Glu). This is Glutamate--tRNA ligase from Methanoculleus marisnigri (strain ATCC 35101 / DSM 1498 / JR1).